The primary structure comprises 435 residues: Nuclear distribution protein nudF 2 (435 aa).

Residues 9-41 enclose the LisH domain; the sequence is QAEELHKSIIAYLSANGLPETTAILRKELGVTE. WD repeat units lie at residues 86 to 125, 128 to 171, 175 to 214, 217 to 256, 280 to 320, 322 to 361, 366 to 396, and 397 to 434; these read SHRDTINCIAFHPKYSSIASGSDDCTIKIWDWELGELEVT, GHTR…KNIR, GHDHIVSAVRFIPNGSLLASASRDMDVRLWDVTNGYCVKT, GHTGWVRDVCASLDGRFILSTGDDMTVRLWDISAKPENKL, APLA…LMTL, GHDNWVRAIVFHPGGRYLLSVSDDKTLRCWDLSQEGKCVK, THGGFITCLRWAPAILKDTPTDAARALVRQI, and PDVAEIMKNATFEESFSDVQIRCVVATGSVDKKLQIFA.

It belongs to the WD repeat LIS1/nudF family. Self-associates. Interacts with nudE and dynein.

It localises to the cytoplasm. The protein resides in the cytoskeleton. The protein localises to the spindle pole. Positively regulates the activity of the minus-end directed microtubule motor protein dynein. May enhance dynein-mediated microtubule sliding by targeting dynein to the microtubule plus end. Required for nuclear migration during vegetative growth as well as development. Required for retrograde early endosome (EE) transport from the hyphal tip. Required for localization of dynein to the mitotic spindle poles. Recruits additional proteins to the dynein complex at SPBs. The chain is Nuclear distribution protein nudF 2 from Aspergillus clavatus (strain ATCC 1007 / CBS 513.65 / DSM 816 / NCTC 3887 / NRRL 1 / QM 1276 / 107).